Consider the following 349-residue polypeptide: Core protein VP7 (349 aa).

N-linked (GlcNAc...) asparagine; by host glycosylation is present at Asn287.

It belongs to the orbivirus VP7 family. In terms of assembly, homotrimer that assemble in a complex of 260 capsomers on an inner scaffold composed of VP3.

Its subcellular location is the virion. Functionally, the VP7 protein is one of the five proteins (with VP1, VP3, VP4, and VP6) which form the inner capsid of the virus. This chain is Core protein VP7 (Segment-7), found in Antilocapra americana (Pronghorn).